The chain runs to 98 residues: uncharacterized protein (98 aa).

Positions 1 to 19 (MTERRRALSLAAVVDSINL) are cleaved as a signal peptide. The disordered stretch occupies residues 40–98 (PPGGSFSGIKRESRRKRPSRNEIYGGGVLEQEVRMRRWSKTASPPVSLHHRPLGPARKP). Positions 87-98 (LHHRPLGPARKP) are enriched in basic residues.

This is an uncharacterized protein from Homo sapiens (Human).